A 264-amino-acid polypeptide reads, in one-letter code: ATP synthase subunit a (264 aa).

The next 6 membrane-spanning stretches (helical) occupy residues Ile-32 to Val-52, Val-89 to Met-109, Asp-134 to Ile-154, Ile-177 to Leu-197, Leu-208 to Val-228, and Leu-235 to Val-255.

Belongs to the ATPase A chain family. F-type ATPases have 2 components, CF(1) - the catalytic core - and CF(0) - the membrane proton channel. CF(1) has five subunits: alpha(3), beta(3), gamma(1), delta(1), epsilon(1). CF(0) has three main subunits: a(1), b(2) and c(9-12). The alpha and beta chains form an alternating ring which encloses part of the gamma chain. CF(1) is attached to CF(0) by a central stalk formed by the gamma and epsilon chains, while a peripheral stalk is formed by the delta and b chains.

It localises to the cell inner membrane. In terms of biological role, key component of the proton channel; it plays a direct role in the translocation of protons across the membrane. The protein is ATP synthase subunit a of Shewanella piezotolerans (strain WP3 / JCM 13877).